Here is an 84-residue protein sequence, read N- to C-terminus: Large ribosomal subunit protein bL27 (84 aa).

The protein belongs to the bacterial ribosomal protein bL27 family.

In Buchnera aphidicola subsp. Acyrthosiphon pisum (strain Tuc7), this protein is Large ribosomal subunit protein bL27.